We begin with the raw amino-acid sequence, 207 residues long: uncharacterized protein (207 aa).

Positions 51 and 72 each coordinate S-adenosyl-L-methionine.

This sequence belongs to the methyltransferase superfamily. YrrT family.

In terms of biological role, could be a S-adenosyl-L-methionine-dependent methyltransferase. This is an uncharacterized protein from Staphylococcus carnosus (strain TM300).